Consider the following 289-residue polypeptide: Zinc finger matrin-type protein 3 (289 aa).

2 Matrin-type zinc fingers span residues 70–100 (LFCK…KLRN) and 147–177 (DYCK…RLRL). 2 disordered regions span residues 180–202 (AQSH…EGSE) and 265–289 (ESKQ…GYVQ). A Matrin-type 3 zinc finger spans residues 245 to 275 (FYCSMCNVGAGEEVEFRQHLESKQHKSKVSE). The span at 265 to 282 (ESKQHKSKVSEQRYRSEM) shows a compositional bias: basic and acidic residues.

As to quaternary structure, interacts with dsRNA. As to expression, highly expressed in brain, gut, lung, and testis.

The protein resides in the nucleus. The protein localises to the nucleolus. In terms of biological role, acts as a bona fide target gene of p53/TP53. May play a role in the TP53-dependent growth regulatory pathway. May contribute to TP53-mediated apoptosis by regulation of TP53 expression and translocation to the nucleus and nucleolus. The sequence is that of Zinc finger matrin-type protein 3 from Rattus norvegicus (Rat).